A 62-amino-acid chain; its full sequence is Protein DsrB (62 aa).

This sequence belongs to the DsrB family.

This chain is Protein DsrB, found in Citrobacter koseri (strain ATCC BAA-895 / CDC 4225-83 / SGSC4696).